The following is a 584-amino-acid chain: Pectinesterase 1 (584 aa).

The signal sequence occupies residues 1-42; it reads MTHIKEFFTKLSESSSNQNISNIPKKKKKLFLALFATLLVVA. 3 N-linked (GlcNAc...) asparagine glycosylation sites follow: Asn108, Asn129, and Asn226. The substrate site is built by Thr348 and Gln378. The active-site Proton donor is Asp401. Cys415 and Cys435 are oxidised to a cystine. Asp422 serves as the catalytic Nucleophile. 2 residues coordinate substrate: Arg490 and Trp492.

The protein in the N-terminal section; belongs to the PMEI family. This sequence in the C-terminal section; belongs to the pectinesterase family. In terms of tissue distribution, expressed at high levels in flower buds, shoots and young leaves, and at lower levels in young fruit, young bark and juice vesicles. Not expressed at significant levels in leaf abscission zones following ethylene treatment or in mature leaves. In fruit abscission zones, expression was initially undetectable but increased markedly following ethylene treatment.

The protein resides in the secreted. It localises to the cell wall. It catalyses the reaction [(1-&gt;4)-alpha-D-galacturonosyl methyl ester](n) + n H2O = [(1-&gt;4)-alpha-D-galacturonosyl](n) + n methanol + n H(+). Its pathway is glycan metabolism; pectin degradation; 2-dehydro-3-deoxy-D-gluconate from pectin: step 1/5. Functionally, acts in the modification of cell walls via demethylesterification of cell wall pectin. The chain is Pectinesterase 1 (PECS-1.1) from Citrus sinensis (Sweet orange).